Here is a 105-residue protein sequence, read N- to C-terminus: MAEWNGEYVSPYAEHGKKSEQVKKITVSIPLKVLRILTDERTRRQVNNLRHATNSELLCEAFLHAFTGQPLPDDADLRKERNDEIPEEAKKIMRELGIDPDTWEY.

This sequence belongs to the MetJ family. As to quaternary structure, homodimer.

It localises to the cytoplasm. In terms of biological role, this regulatory protein, when combined with SAM (S-adenosylmethionine) represses the expression of the methionine regulon and of enzymes involved in SAM synthesis. This chain is Met repressor, found in Photorhabdus laumondii subsp. laumondii (strain DSM 15139 / CIP 105565 / TT01) (Photorhabdus luminescens subsp. laumondii).